We begin with the raw amino-acid sequence, 515 residues long: ATP synthase subunit alpha (515 aa).

Residue 171 to 178 (GDRQTGKT) coordinates ATP.

Belongs to the ATPase alpha/beta chains family. As to quaternary structure, F-type ATPases have 2 components, CF(1) - the catalytic core - and CF(0) - the membrane proton channel. CF(1) has five subunits: alpha(3), beta(3), gamma(1), delta(1), epsilon(1). CF(0) has three main subunits: a(1), b(2) and c(9-12). The alpha and beta chains form an alternating ring which encloses part of the gamma chain. CF(1) is attached to CF(0) by a central stalk formed by the gamma and epsilon chains, while a peripheral stalk is formed by the delta and b chains.

Its subcellular location is the cell inner membrane. It carries out the reaction ATP + H2O + 4 H(+)(in) = ADP + phosphate + 5 H(+)(out). Produces ATP from ADP in the presence of a proton gradient across the membrane. The alpha chain is a regulatory subunit. The chain is ATP synthase subunit alpha from Xylella fastidiosa (strain M12).